The sequence spans 207 residues: MPKVALYNQSGETIGEIELNDSVFGIEPNKHVLFEAVIMQRASLRQGTHKTKNRAEVSGGGRKPWRQKGTGRARQGSIRAPQWRGGGTVFGPVPRSYSYKLPKKVRRLAIKSALSSKVLENNIVVLDNLTLEAPKTKEMVKILNNLSVDRKALIVTDDVNENVTLSARNIPGVTVVTANGINVLDVLNHDKLVITKAAVEKVEEVLA.

The segment at arginine 45–isoleucine 78 is disordered.

This sequence belongs to the universal ribosomal protein uL4 family. In terms of assembly, part of the 50S ribosomal subunit.

Its function is as follows. One of the primary rRNA binding proteins, this protein initially binds near the 5'-end of the 23S rRNA. It is important during the early stages of 50S assembly. It makes multiple contacts with different domains of the 23S rRNA in the assembled 50S subunit and ribosome. In terms of biological role, forms part of the polypeptide exit tunnel. The chain is Large ribosomal subunit protein uL4 from Geobacillus sp. (strain WCH70).